A 326-amino-acid chain; its full sequence is S-methyl-5'-thioadenosine phosphorylase (326 aa).

Residues serine 44, 86 to 87 (RH), and 119 to 120 (SA) each bind phosphate. Methionine 220 lines the substrate pocket. Threonine 221 lines the phosphate pocket. Position 244-246 (244-246 (DYD)) interacts with substrate.

The protein belongs to the PNP/MTAP phosphorylase family. MTAP subfamily. Homohexamer. Dimer of a homotrimer.

The enzyme catalyses S-methyl-5'-thioadenosine + phosphate = 5-(methylsulfanyl)-alpha-D-ribose 1-phosphate + adenine. It functions in the pathway amino-acid biosynthesis; L-methionine biosynthesis via salvage pathway; S-methyl-5-thio-alpha-D-ribose 1-phosphate from S-methyl-5'-thioadenosine (phosphorylase route): step 1/1. Catalyzes the reversible phosphorylation of S-methyl-5'-thioadenosine (MTA) to adenine and 5-methylthioribose-1-phosphate. Involved in the breakdown of MTA, a major by-product of polyamine biosynthesis. Responsible for the first step in the methionine salvage pathway after MTA has been generated from S-adenosylmethionine. Has broad substrate specificity with 6-aminopurine nucleosides as preferred substrates. The protein is S-methyl-5'-thioadenosine phosphorylase of Synechocystis sp. (strain PCC 6803 / GT-S).